Consider the following 156-residue polypeptide: Ecotin (156 aa).

The first 19 residues, 1 to 19 (MKALLIAAGVAALSSTAMA), serve as a signal peptide directing secretion. Cysteines 65 and 102 form a disulfide.

It belongs to the protease inhibitor I11 (ecotin) family. Homodimer.

Its subcellular location is the periplasm. In terms of biological role, general inhibitor of family S1 serine proteases. This Pseudomonas aeruginosa (strain UCBPP-PA14) protein is Ecotin.